Reading from the N-terminus, the 146-residue chain is Transcriptional regulator MraZ (146 aa).

SpoVT-AbrB domains are found at residues 9–55 (TSAL…PRPV) and 81–124 (AMDV…DAQR).

This sequence belongs to the MraZ family. As to quaternary structure, forms oligomers.

The protein localises to the cytoplasm. The protein resides in the nucleoid. In Leptothrix cholodnii (strain ATCC 51168 / LMG 8142 / SP-6) (Leptothrix discophora (strain SP-6)), this protein is Transcriptional regulator MraZ.